A 173-amino-acid polypeptide reads, in one-letter code: Ribosome maturation factor RimM (173 aa).

The PRC barrel domain occupies 90-169 (EDEYFWFDIL…RIDTKGAQDI (80 aa)).

This sequence belongs to the RimM family. Binds ribosomal protein uS19.

The protein localises to the cytoplasm. Functionally, an accessory protein needed during the final step in the assembly of 30S ribosomal subunit, possibly for assembly of the head region. Essential for efficient processing of 16S rRNA. May be needed both before and after RbfA during the maturation of 16S rRNA. It has affinity for free ribosomal 30S subunits but not for 70S ribosomes. The chain is Ribosome maturation factor RimM from Nitratiruptor sp. (strain SB155-2).